The primary structure comprises 210 residues: LexA repressor (210 aa).

A DNA-binding region (H-T-H motif) is located at residues 28-48 (FEEIAEGMGLSSLATVHKHIG). Catalysis depends on for autocatalytic cleavage activity residues Ser-131 and Lys-169.

Belongs to the peptidase S24 family. In terms of assembly, homodimer.

It carries out the reaction Hydrolysis of Ala-|-Gly bond in repressor LexA.. Represses a number of genes involved in the response to DNA damage (SOS response), including recA and lexA. In the presence of single-stranded DNA, RecA interacts with LexA causing an autocatalytic cleavage which disrupts the DNA-binding part of LexA, leading to derepression of the SOS regulon and eventually DNA repair. The polypeptide is LexA repressor (Koribacter versatilis (strain Ellin345)).